We begin with the raw amino-acid sequence, 390 residues long: MRTNTTATVLLAAAVALLLATAARGDGGDGGCGKEDAAAGRDRARARGLKIAAFFSILVCGALGCGLPSLGRHVPALRPDGDVFFLVKAFAAGVILATGFIHILPDAFDNLTDDCLPAGGPWKEFPFAGFGAMVGAIGTLVVDTLATGYFTRALSKKDAATAAAVADEEKQSAAATQQHNHHHNHHVVGDGGGGGEEHEGQVHVHTHATHGHAHGSSALVAAVGEDDKETTLRHRVISQVLELGIVVHSVIIGISLGASQNPETIKPLVVALSFHQMFEGMGLGGCIVQAKFKVRSIVTMVLFFCLTTPVGIAVGVGISSVYNESSPTALVVEGILNSVAAGILIYMALVDLLAEDFMNPRVQSKGKLQLGINLAMLAGAGLMSMLAKWA.

Positions 1-25 (MRTNTTATVLLAAAVALLLATAARG) are cleaved as a signal peptide. The N-linked (GlcNAc...) asparagine glycan is linked to N4. Topologically, residues 26 to 50 (DGGDGGCGKEDAAAGRDRARARGLK) are extracellular. A helical membrane pass occupies residues 51-71 (IAAFFSILVCGALGCGLPSLG). Residues 72–82 (RHVPALRPDGD) are Cytoplasmic-facing. Residues 83-103 (VFFLVKAFAAGVILATGFIHI) traverse the membrane as a helical segment. At 104–124 (LPDAFDNLTDDCLPAGGPWKE) the chain is on the extracellular side. N110 carries an N-linked (GlcNAc...) asparagine glycan. The helical transmembrane segment at 125–145 (FPFAGFGAMVGAIGTLVVDTL) threads the bilayer. At 146-235 (ATGYFTRALS…DDKETTLRHR (90 aa)) the chain is on the cytoplasmic side. The segment at 165–199 (VADEEKQSAAATQQHNHHHNHHVVGDGGGGGEEHE) is disordered. Residues 236–256 (VISQVLELGIVVHSVIIGISL) form a helical membrane-spanning segment. The Extracellular portion of the chain corresponds to 257-267 (GASQNPETIKP). A helical membrane pass occupies residues 268–288 (LVVALSFHQMFEGMGLGGCIV). Residues 289 to 296 (QAKFKVRS) are Cytoplasmic-facing. A helical membrane pass occupies residues 297 to 317 (IVTMVLFFCLTTPVGIAVGVG). The Extracellular portion of the chain corresponds to 318 to 329 (ISSVYNESSPTA). An N-linked (GlcNAc...) asparagine glycan is attached at N323. The chain crosses the membrane as a helical span at residues 330-350 (LVVEGILNSVAAGILIYMALV). Residues 351–369 (DLLAEDFMNPRVQSKGKLQ) lie on the Cytoplasmic side of the membrane. The chain crosses the membrane as a helical span at residues 370 to 390 (LGINLAMLAGAGLMSMLAKWA).

This sequence belongs to the ZIP transporter (TC 2.A.5) family.

The protein localises to the cell membrane. Zinc transporter that may mediate zinc uptake from the rhizosphere and may be responsible for the translocation of zinc within the plant. The polypeptide is Zinc transporter 8 (ZIP8) (Oryza sativa subsp. japonica (Rice)).